A 253-amino-acid chain; its full sequence is 2-dehydro-3-deoxy-D-gluconate 5-dehydrogenase (253 aa).

14–38 contacts NAD(+); that stretch reads VVTGCDTGLGQGMALGLAQAGCDIV. Ser145 lines the substrate pocket. The Proton acceptor role is filled by Tyr158.

The protein belongs to the short-chain dehydrogenases/reductases (SDR) family. As to quaternary structure, homotetramer.

The enzyme catalyses 2-dehydro-3-deoxy-D-gluconate + NAD(+) = 3-deoxy-D-glycero-2,5-hexodiulosonate + NADH + H(+). The catalysed reaction is 4-pregnen-20,21-diol-3-one + NAD(+) = 21-hydroxyprogesterone + NADH + H(+). In terms of biological role, catalyzes the reversible reduction of 2,5-diketo-3-deoxygluconate (DKII or 4,6-dihydroxy-2,5-dioxohexanoate) into 2-keto-3-deoxygluconate (KDG or 2-dehydro-3-deoxygluconate) with a concomitant oxidation of NADH. To a lesser extent, can also reduce 5-keto-D-gluconate and oxidize D-gluconate and 1,2-propanediol. Together with KduI, seems to play a role in the catabolism of hexuronates under osmotic stress conditions, substituting for the regular hexuronate degrading enzymes UxaABC and UxuAB whose expression is repressed in these conditions. In vitro, also exhibits NADH-dependent 20-ketosteroid reductase activity against eukaryotic steroid hormone 11-deoxycorticosterone (11-DOC), which is converted into the product 4-pregnen-20,21-diol-3-one. In addition to 11-DOC, five other C21 steroid compounds (11-deoxycortisol, cortisol, corticosterone, cortisone, and 21-hydroxypregnenolone) are reduced by KduD, but steroids lacking the hydroxyl group at C21 position, such as pregnenolone, testosterone propionate, cortisone acetate, or progesterone, cannot be used as substrate. The sequence is that of 2-dehydro-3-deoxy-D-gluconate 5-dehydrogenase from Escherichia coli (strain K12).